The following is a 353-amino-acid chain: MLYQILLRLFFLVSPERVHTLVFAALRAIAAFTPTRWLLNRLCAPTDPILGTEVFGVHFPAPLGLAAGFDKDGEGLKVWGPLGFGYAEVGTVTAIAQPGNPKPRLFRLPADRGLLNRMGFNNHGAAALAPRLATRTSTVPIGANIGKSKIVEPAFASSDYRVSARQVGPAADFLVVNVSSPNTPGLRDLQAIGELRKILSAVLEETTAPVLVKIAPDLSDADIDEIADLAVELGLAGIVATNTTISRAALKTTGVEDLGAGGVSGPPVAARSLEVLRRLYRRVGDRLVLISVGGIEDADDAWARIIAGASLLQGYTGFIYRGGFYAKRIHDGIAQRLRAGGFASLQDAVGSAT.

Residues alanine 67–lysine 71 and threonine 91 each bind FMN. Residue lysine 71 coordinates substrate. Asparagine 116–phenylalanine 120 contributes to the substrate binding site. Residues asparagine 144 and asparagine 177 each coordinate FMN. Position 177 (asparagine 177) interacts with substrate. Serine 180 functions as the Nucleophile in the catalytic mechanism. Asparagine 182 serves as a coordination point for substrate. Positions 213 and 241 each coordinate FMN. A substrate-binding site is contributed by asparagine 242–threonine 243. FMN-binding positions include glycine 265, glycine 294, and tyrosine 315 to threonine 316.

It belongs to the dihydroorotate dehydrogenase family. Type 2 subfamily. As to quaternary structure, monomer. FMN is required as a cofactor.

The protein resides in the cell membrane. The catalysed reaction is (S)-dihydroorotate + a quinone = orotate + a quinol. It participates in pyrimidine metabolism; UMP biosynthesis via de novo pathway; orotate from (S)-dihydroorotate (quinone route): step 1/1. Functionally, catalyzes the conversion of dihydroorotate to orotate with quinone as electron acceptor. In Mycobacteroides abscessus (strain ATCC 19977 / DSM 44196 / CCUG 20993 / CIP 104536 / JCM 13569 / NCTC 13031 / TMC 1543 / L948) (Mycobacterium abscessus), this protein is Dihydroorotate dehydrogenase (quinone).